Here is a 201-residue protein sequence, read N- to C-terminus: Glycerol-3-phosphate acyltransferase (201 aa).

The next 5 membrane-spanning stretches (helical) occupy residues 10–30 (ALIL…GIVI), 59–79 (PAAL…VLIA), 87–107 (AAQL…WLGF), 116–136 (FLGT…LTWL), and 161–181 (ILLG…LIFI).

Belongs to the PlsY family. Probably interacts with PlsX.

Its subcellular location is the cell inner membrane. The enzyme catalyses an acyl phosphate + sn-glycerol 3-phosphate = a 1-acyl-sn-glycero-3-phosphate + phosphate. The protein operates within lipid metabolism; phospholipid metabolism. In terms of biological role, catalyzes the transfer of an acyl group from acyl-phosphate (acyl-PO(4)) to glycerol-3-phosphate (G3P) to form lysophosphatidic acid (LPA). This enzyme utilizes acyl-phosphate as fatty acyl donor, but not acyl-CoA or acyl-ACP. In Cereibacter sphaeroides (strain ATCC 17029 / ATH 2.4.9) (Rhodobacter sphaeroides), this protein is Glycerol-3-phosphate acyltransferase.